A 245-amino-acid polypeptide reads, in one-letter code: Orotidine 5'-phosphate decarboxylase (245 aa).

Residues D22, K44, 71–80 (DLKFHDIPNT), T131, R192, Q201, G221, and R222 contribute to the substrate site. K73 functions as the Proton donor in the catalytic mechanism.

Belongs to the OMP decarboxylase family. Type 1 subfamily. As to quaternary structure, homodimer.

It catalyses the reaction orotidine 5'-phosphate + H(+) = UMP + CO2. Its pathway is pyrimidine metabolism; UMP biosynthesis via de novo pathway; UMP from orotate: step 2/2. Functionally, catalyzes the decarboxylation of orotidine 5'-monophosphate (OMP) to uridine 5'-monophosphate (UMP). In Yersinia pestis bv. Antiqua (strain Antiqua), this protein is Orotidine 5'-phosphate decarboxylase.